The following is a 312-amino-acid chain: R2-like ligand binding oxidase (312 aa).

Mn(2+) contacts are provided by glutamate 68, glutamate 101, and histidine 104. The 3-(O4'-tyrosyl)-valine (Val-Tyr) cross-link spans 71–162 (VTQDIQPFMA…AAQVRASVTY (92 aa)). Position 101 (glutamate 101) interacts with Fe cation. Glutamate 167, glutamate 202, and histidine 205 together coordinate Fe cation.

It belongs to the ribonucleoside diphosphate reductase small chain family. R2-like ligand binding oxidase subfamily. In terms of assembly, homodimer. The cofactor is Fe cation. It depends on Mn(2+) as a cofactor.

In terms of biological role, probable oxidase that might be involved in lipid metabolism. In Mycolicibacterium vanbaalenii (strain DSM 7251 / JCM 13017 / BCRC 16820 / KCTC 9966 / NRRL B-24157 / PYR-1) (Mycobacterium vanbaalenii), this protein is R2-like ligand binding oxidase.